Reading from the N-terminus, the 315-residue chain is Methionyl-tRNA formyltransferase (315 aa).

Position 112-115 (S112–P115) interacts with (6S)-5,6,7,8-tetrahydrofolate.

Belongs to the Fmt family.

It catalyses the reaction L-methionyl-tRNA(fMet) + (6R)-10-formyltetrahydrofolate = N-formyl-L-methionyl-tRNA(fMet) + (6S)-5,6,7,8-tetrahydrofolate + H(+). Functionally, attaches a formyl group to the free amino group of methionyl-tRNA(fMet). The formyl group appears to play a dual role in the initiator identity of N-formylmethionyl-tRNA by promoting its recognition by IF2 and preventing the misappropriation of this tRNA by the elongation apparatus. This is Methionyl-tRNA formyltransferase from Leptospira borgpetersenii serovar Hardjo-bovis (strain JB197).